The sequence spans 24 residues: N-acyl-L-amino acid amidohydrolase (24 aa).

It belongs to the peptidase M20 family. Homotetramer. Requires Co(2+) as cofactor.

It carries out the reaction an N-acyl-L-amino acid + H2O = an L-alpha-amino acid + a carboxylate. The enzyme catalyses an N-acetyl-L-cysteine-S-conjugate + H2O = an S-substituted L-cysteine + acetate. The sequence is that of N-acyl-L-amino acid amidohydrolase from Parageobacillus thermoglucosidasius (Geobacillus thermoglucosidasius).